A 520-amino-acid polypeptide reads, in one-letter code: Maturase K (520 aa).

Belongs to the intron maturase 2 family. MatK subfamily.

Its subcellular location is the plastid. It localises to the chloroplast. Its function is as follows. Usually encoded in the trnK tRNA gene intron. Probably assists in splicing its own and other chloroplast group II introns. This is Maturase K from Ruscus aculeatus (Butcher's broom).